The chain runs to 279 residues: NH(3)-dependent NAD(+) synthetase (279 aa).

46-53 (GVSGGQDS) contacts ATP. Aspartate 52 lines the Mg(2+) pocket. Arginine 139 contacts deamido-NAD(+). Threonine 159 is an ATP binding site. Glutamate 164 provides a ligand contact to Mg(2+). Positions 172 and 179 each coordinate deamido-NAD(+). Residues lysine 188 and threonine 210 each contribute to the ATP site. Residue 259-260 (HK) participates in deamido-NAD(+) binding.

This sequence belongs to the NAD synthetase family. In terms of assembly, homodimer.

It carries out the reaction deamido-NAD(+) + NH4(+) + ATP = AMP + diphosphate + NAD(+) + H(+). It functions in the pathway cofactor biosynthesis; NAD(+) biosynthesis; NAD(+) from deamido-NAD(+) (ammonia route): step 1/1. In terms of biological role, catalyzes the ATP-dependent amidation of deamido-NAD to form NAD. Uses ammonia as a nitrogen source. The sequence is that of NH(3)-dependent NAD(+) synthetase from Leifsonia xyli subsp. xyli (strain CTCB07).